A 118-amino-acid chain; its full sequence is Large ribosomal subunit protein bL17 (118 aa).

This sequence belongs to the bacterial ribosomal protein bL17 family. In terms of assembly, part of the 50S ribosomal subunit. Contacts protein L32.

The chain is Large ribosomal subunit protein bL17 from Aster yellows witches'-broom phytoplasma (strain AYWB).